Consider the following 142-residue polypeptide: Putative pre-16S rRNA nuclease (142 aa).

The protein belongs to the YqgF nuclease family.

It is found in the cytoplasm. Functionally, could be a nuclease involved in processing of the 5'-end of pre-16S rRNA. The sequence is that of Putative pre-16S rRNA nuclease from Nitratidesulfovibrio vulgaris (strain DP4) (Desulfovibrio vulgaris).